We begin with the raw amino-acid sequence, 391 residues long: MFGTATSANATRVLLLGSGELGKEVAIECQRLGLEVIACDRYADAPAMQVAHRSYVLDMLDGKALEEIINKEQPAYVVPEIEAIATDKLVDLEEKGLNVVPTAKATKLTMNREGIRRLAAEELDLSTSPYRFADNYDDFKAAVEHVGIPCVVKPVMSSSGKGQSVIKTEDDIEKAWDYAQEGGRTGAGRVIVEGFIDFDYEITLLTVRAVDGVHFCAPIGHRQEDGDYRESWQPQAMSENAIKAAEYTAEKVVNALSGYGIFGVELFVKGDKVIFNEVSPRPHDTGMVTMISQEMSEFALHVRAFTGMPINKIVQYGPSASAVILGQGTSTDIRFDNLAKALAQPQTQVRLFGKPEIDGRRRLGVVLTRRKTIEESVQDAVENAKKVKIVY.

N(1)-(5-phospho-beta-D-ribosyl)glycinamide-binding positions include 20–21 (EL) and glutamate 80. ATP contacts are provided by residues arginine 112, lysine 153, 158 to 163 (SSGKGQ), 193 to 196 (EGFI), and glutamate 201. An ATP-grasp domain is found at 117–306 (RLAAEELDLS…EFALHVRAFT (190 aa)). The Mg(2+) site is built by glutamate 265 and glutamate 277. N(1)-(5-phospho-beta-D-ribosyl)glycinamide-binding positions include aspartate 284, lysine 354, and 361–362 (RR).

Belongs to the PurK/PurT family. As to quaternary structure, homodimer.

The catalysed reaction is N(1)-(5-phospho-beta-D-ribosyl)glycinamide + formate + ATP = N(2)-formyl-N(1)-(5-phospho-beta-D-ribosyl)glycinamide + ADP + phosphate + H(+). The protein operates within purine metabolism; IMP biosynthesis via de novo pathway; N(2)-formyl-N(1)-(5-phospho-D-ribosyl)glycinamide from N(1)-(5-phospho-D-ribosyl)glycinamide (formate route): step 1/1. Involved in the de novo purine biosynthesis. Catalyzes the transfer of formate to 5-phospho-ribosyl-glycinamide (GAR), producing 5-phospho-ribosyl-N-formylglycinamide (FGAR). Formate is provided by PurU via hydrolysis of 10-formyl-tetrahydrofolate. The protein is Formate-dependent phosphoribosylglycinamide formyltransferase of Vibrio parahaemolyticus serotype O3:K6 (strain RIMD 2210633).